Consider the following 395-residue polypeptide: Chaperone protein DnaJ 2 (395 aa).

The 66-residue stretch at 10–75 folds into the J domain; that stretch reads NYYADLGVSS…KKRKEYDELK (66 aa). The segment at 165-242 adopts a CR-type zinc-finger fold; the sequence is GTTIPVELTG…CHGRGTVRKS (78 aa). Zn(2+)-binding residues include C178, C181, C194, C197, C216, C219, C230, and C233. CXXCXGXG motif repeat units lie at residues 178–185, 194–201, 216–223, and 230–237; these read CNTCHGSG, CGTCDGTG, CATCGGTG, and CDNCHGRG.

Belongs to the DnaJ family. Homodimer. It depends on Zn(2+) as a cofactor.

The protein resides in the cytoplasm. Functionally, participates actively in the response to hyperosmotic and heat shock by preventing the aggregation of stress-denatured proteins and by disaggregating proteins, also in an autonomous, DnaK-independent fashion. Unfolded proteins bind initially to DnaJ; upon interaction with the DnaJ-bound protein, DnaK hydrolyzes its bound ATP, resulting in the formation of a stable complex. GrpE releases ADP from DnaK; ATP binding to DnaK triggers the release of the substrate protein, thus completing the reaction cycle. Several rounds of ATP-dependent interactions between DnaJ, DnaK and GrpE are required for fully efficient folding. Also involved, together with DnaK and GrpE, in the DNA replication of plasmids through activation of initiation proteins. In Corynebacterium glutamicum (strain ATCC 13032 / DSM 20300 / JCM 1318 / BCRC 11384 / CCUG 27702 / LMG 3730 / NBRC 12168 / NCIMB 10025 / NRRL B-2784 / 534), this protein is Chaperone protein DnaJ 2.